The chain runs to 358 residues: Small ribosomal subunit biogenesis GTPase RsgA (358 aa).

In terms of domain architecture, CP-type G spans 76–234 (STEIDRPAVA…LADSPGFNQP (159 aa)). Residues 125 to 128 (NKID) and 176 to 184 (GPSGVGKSS) each bind GTP. Positions 259, 264, 266, and 272 each coordinate Zn(2+). Positions 319–358 (TYEPKLANKKYRRPSRRGKNQDQERYENKTLQDIYNDDSE) are disordered. Positions 325 to 336 (ANKKYRRPSRRG) are enriched in basic residues. Over residues 337 to 348 (KNQDQERYENKT) the composition is skewed to basic and acidic residues.

The protein belongs to the TRAFAC class YlqF/YawG GTPase family. RsgA subfamily. In terms of assembly, monomer. Associates with 30S ribosomal subunit, binds 16S rRNA. Zn(2+) serves as cofactor.

The protein localises to the cytoplasm. Functionally, one of several proteins that assist in the late maturation steps of the functional core of the 30S ribosomal subunit. Helps release RbfA from mature subunits. May play a role in the assembly of ribosomal proteins into the subunit. Circularly permuted GTPase that catalyzes slow GTP hydrolysis, GTPase activity is stimulated by the 30S ribosomal subunit. The protein is Small ribosomal subunit biogenesis GTPase RsgA of Microcystis aeruginosa (strain NIES-843 / IAM M-2473).